A 93-amino-acid chain; its full sequence is YcgL domain-containing protein Swoo_2115 (93 aa).

In terms of domain architecture, YcgL spans 1–85; it reads MICAVYKSRR…PVVNLLEEHK (85 aa).

The protein is YcgL domain-containing protein Swoo_2115 of Shewanella woodyi (strain ATCC 51908 / MS32).